We begin with the raw amino-acid sequence, 276 residues long: Cholesterol 25-hydroxylase-like protein 1, member 2 (276 aa).

The N-linked (GlcNAc...) asparagine glycan is linked to asparagine 30. 3 consecutive transmembrane segments (helical) span residues leucine 39–cysteine 59, glycine 90–tryptophan 110, and leucine 126–phenylalanine 146. The Fatty acid hydroxylase domain maps to leucine 134–threonine 265. A Histidine box-1 motif is present at residues tryptophan 144 to histidine 148. The short motif at histidine 159–histidine 163 is the Histidine box-2 element. Asparagine 164 carries an N-linked (GlcNAc...) asparagine glycan. The next 2 helical transmembrane spans lie at cysteine 175 to leucine 195 and leucine 199 to glycine 219. The short motif at lysine 240 to glutamine 246 is the Histidine box-3 element.

Belongs to the sterol desaturase family. Requires Fe cation as cofactor.

The protein resides in the endoplasmic reticulum membrane. Its function is as follows. May catalyze the formation of 25-hydroxycholesterol from cholesterol. This is Cholesterol 25-hydroxylase-like protein 1, member 2 from Danio rerio (Zebrafish).